The primary structure comprises 175 residues: Receptor activity-modifying protein 2 (175 aa).

A signal peptide spans 1-42; sequence MASLRVERAGGPRLPRTRVGRPAALRLLLLLGAVLNPHEALA. Topologically, residues 43-143 are extracellular; it reads QPLPTTGTPG…VQPTFSDPPE (101 aa). 2 disulfides stabilise this stretch: Cys68–Cys99 and Cys84–Cys131. An N-linked (GlcNAc...) asparagine glycan is attached at Asn130. Residues 144-165 traverse the membrane as a helical segment; it reads DVLLAMIIAPICLIPFLITLVV. The Cytoplasmic segment spans residues 166–175; it reads WRSKDSEAQA.

The protein belongs to the RAMP family. Heterodimer of CALCRL and RAMP2; the interaction forms the receptor complex for adrenomedullin/ADM. Heterodimer of CALCR and RAMP2; interaction forms the AMYR2 receptor complex for calcitonin/CALC and amylin/IAPP. As to expression, strongly expressed in lung, breast, immune system and fetal tissues.

Its subcellular location is the cell membrane. Accessory protein that interacts with and modulates the function of G-protein coupled receptors including calcitonin gene-related peptide type 1 receptor (CALCRL) and calcitonin receptor (CALCR). Required for the transport of CALCRL to the plasma membrane. Together with CALCRL, form a receptor complex for adrenomedullin/ADM. Together with CALCR, act as a receptor complex for calcitonin/CT/CALC. Together with CALCR, also act as a receptor complex for amylin/IAPP. The chain is Receptor activity-modifying protein 2 from Homo sapiens (Human).